An 879-amino-acid polypeptide reads, in one-letter code: Pyruvate dehydrogenase phosphatase regulatory subunit, mitochondrial (879 aa).

Residues 1 to 27 constitute a mitochondrion transit peptide; it reads MMFYRLLSIVGRQRASPGWQNWSSARN.

Belongs to the GcvT family. Heterodimer of a catalytic (PDP1) and a regulatory (PDPR) subunit.

Its subcellular location is the mitochondrion matrix. Decreases the sensitivity of PDP1 to magnesium ions, and this inhibition is reversed by the polyamine spermine. In Homo sapiens (Human), this protein is Pyruvate dehydrogenase phosphatase regulatory subunit, mitochondrial (PDPR).